We begin with the raw amino-acid sequence, 500 residues long: Aldehyde dehydrogenase, mitochondrial (500 aa).

4 positions are modified to N6-acetyllysine: Lys-35, Lys-56, Lys-61, and Lys-142. An NAD(+)-binding site is contributed by 245–250 (GSTEVG). Glu-268 (proton acceptor) is an active-site residue. Cys-302 (nucleophile) is an active-site residue. An N6-acetyllysine mark is found at Lys-351, Lys-358, Lys-366, Lys-390, Lys-409, Lys-411, Lys-424, and Lys-434.

It belongs to the aldehyde dehydrogenase family. Homotetramer. In response to mitochondrial stress, the precursor protein is ubiquitinated by the SIFI complex in the cytoplasm before mitochondrial import, leading to its degradation. Within the SIFI complex, UBR4 initiates ubiquitin chain that are further elongated or branched by KCMF1.

Its subcellular location is the mitochondrion matrix. The catalysed reaction is an aldehyde + NAD(+) + H2O = a carboxylate + NADH + 2 H(+). It participates in alcohol metabolism; ethanol degradation; acetate from ethanol: step 2/2. In terms of biological role, required for clearance of cellular formaldehyde, a cytotoxic and carcinogenic metabolite that induces DNA damage. In Mesocricetus auratus (Golden hamster), this protein is Aldehyde dehydrogenase, mitochondrial (ALDH2).